Reading from the N-terminus, the 447-residue chain is Methylenetetrahydrofolate--tRNA-(uracil-5-)-methyltransferase TrmFO (447 aa).

Residue 13 to 18 (GAGLAG) participates in FAD binding.

This sequence belongs to the MnmG family. TrmFO subfamily. FAD serves as cofactor.

Its subcellular location is the cytoplasm. It carries out the reaction uridine(54) in tRNA + (6R)-5,10-methylene-5,6,7,8-tetrahydrofolate + NADH + H(+) = 5-methyluridine(54) in tRNA + (6S)-5,6,7,8-tetrahydrofolate + NAD(+). It catalyses the reaction uridine(54) in tRNA + (6R)-5,10-methylene-5,6,7,8-tetrahydrofolate + NADPH + H(+) = 5-methyluridine(54) in tRNA + (6S)-5,6,7,8-tetrahydrofolate + NADP(+). Catalyzes the folate-dependent formation of 5-methyl-uridine at position 54 (M-5-U54) in all tRNAs. This Streptococcus thermophilus (strain ATCC BAA-250 / LMG 18311) protein is Methylenetetrahydrofolate--tRNA-(uracil-5-)-methyltransferase TrmFO.